Here is a 333-residue protein sequence, read N- to C-terminus: Anthranilate phosphoribosyltransferase (333 aa).

5-phospho-alpha-D-ribose 1-diphosphate is bound by residues Gly-81, 84–85 (GN), Thr-89, 91–94 (NIST), 109–117 (KHGNRSVSS), and Ala-121. Gly-81 provides a ligand contact to anthranilate. Ser-93 provides a ligand contact to Mg(2+). Asn-112 contributes to the anthranilate binding site. Arg-167 provides a ligand contact to anthranilate. 2 residues coordinate Mg(2+): Asp-225 and Glu-226.

It belongs to the anthranilate phosphoribosyltransferase family. Homodimer. Requires Mg(2+) as cofactor.

The enzyme catalyses N-(5-phospho-beta-D-ribosyl)anthranilate + diphosphate = 5-phospho-alpha-D-ribose 1-diphosphate + anthranilate. It functions in the pathway amino-acid biosynthesis; L-tryptophan biosynthesis; L-tryptophan from chorismate: step 2/5. Its function is as follows. Catalyzes the transfer of the phosphoribosyl group of 5-phosphorylribose-1-pyrophosphate (PRPP) to anthranilate to yield N-(5'-phosphoribosyl)-anthranilate (PRA). This Haemophilus influenzae (strain ATCC 51907 / DSM 11121 / KW20 / Rd) protein is Anthranilate phosphoribosyltransferase.